A 156-amino-acid chain; its full sequence is Ribosomal RNA large subunit methyltransferase H (156 aa).

S-adenosyl-L-methionine contacts are provided by residues Leu-73, Gly-104, and 123 to 128 (LSPLTL).

It belongs to the RNA methyltransferase RlmH family. Homodimer.

Its subcellular location is the cytoplasm. The enzyme catalyses pseudouridine(1915) in 23S rRNA + S-adenosyl-L-methionine = N(3)-methylpseudouridine(1915) in 23S rRNA + S-adenosyl-L-homocysteine + H(+). Its function is as follows. Specifically methylates the pseudouridine at position 1915 (m3Psi1915) in 23S rRNA. This Serratia proteamaculans (strain 568) protein is Ribosomal RNA large subunit methyltransferase H.